The sequence spans 439 residues: MTFDDLTEGQKNAFNIVMKAIKEKKHHVTINGPAGTGKTTLTKFIIEALISTGGTGIILAAPTHAAKKILSKLSGKEASTIHSILKINPVTYEENVLFEQKEVPDLAKCRVLICDEVSMYDRKLFKILLSTIPPWCTIIGIGDNKQIRPVEPGENTAYISPFFTHKDFYQCELTEVKRSNAPIIDVATDVRNGKWNYDKVVDGHGVRGFTGDTALRDFMVNYFSIVKSLDDLFENRVMAFTNKSVDKLNSIIRKKIFETDKDFIVGEIIVMQEPLFKTYKIDGKPVSEIIFNNGQLVRIIEAEYTSTFVKARGVPGEYLIRHWDLTVETYGDDEYYREKIKIISSDEELYKFNLFLAKTAETYKNWNKGGKAPWSDFWDAKSQFSKVKALPASTFHKAQGMSVDRAFIYTPCIHYADVELAQQLLYVGVTRGRYDVFYV.

Residue 32–39 (GPAGTGKT) coordinates ATP.

Monomer. Interacts with UvsX and gene 32 protein.

The catalysed reaction is Couples ATP hydrolysis with the unwinding of duplex DNA at the replication fork by translocating in the 5'-3' direction. This creates two antiparallel DNA single strands (ssDNA). The leading ssDNA polymer is the template for DNA polymerase III holoenzyme which synthesizes a continuous strand.. The enzyme catalyses ATP + H2O = ADP + phosphate + H(+). Functionally, DNA helicase that stimulates viral DNA replication and recombination. Plays a role in T4 DNA replication initiation by selecting and activating DNA origins. Acts by dissociating and reassociating with the DNA molecule being unwound. Unwinds DNA as a monomer in a 5'-3' direction at a rate of 250 bp/s and can efficiently displace proteins from the DNA. In Enterobacteria phage T4 (Bacteriophage T4), this protein is ATP-dependent DNA helicase dda (dda).